A 444-amino-acid chain; its full sequence is Biotin carboxylase 2 (444 aa).

The region spanning 1–444 (MFTKVLIANR…VTTDFLKQHL (444 aa)) is the Biotin carboxylation domain. ATP is bound by residues K116, K158, 164–165 (GG), 200–203 (EKVI), H208, and H235. Positions 120–317 (RKAMEAAGVP…LVEQQLRIAA (198 aa)) constitute an ATP-grasp domain. K237 serves as a coordination point for hydrogencarbonate. ATP contacts are provided by E275 and E288. Residues E275, E288, and N290 each contribute to the Mg(2+) site. Mn(2+)-binding residues include E275, E288, and N290. 3 residues coordinate hydrogencarbonate: R292, V295, and R338. Residue R292 is part of the active site. Biotin is bound at residue R338.

Acetyl-CoA carboxylase is a heterohexamer of biotin carboxyl carrier protein, biotin carboxylase and the two subunits of carboxyl transferase in a 2:2 complex. Mg(2+) is required as a cofactor. It depends on Mn(2+) as a cofactor.

The catalysed reaction is N(6)-biotinyl-L-lysyl-[protein] + hydrogencarbonate + ATP = N(6)-carboxybiotinyl-L-lysyl-[protein] + ADP + phosphate + H(+). Its pathway is lipid metabolism; malonyl-CoA biosynthesis; malonyl-CoA from acetyl-CoA: step 1/1. In terms of biological role, this protein is a component of the acetyl coenzyme A carboxylase complex; first, biotin carboxylase catalyzes the carboxylation of the carrier protein and then the transcarboxylase transfers the carboxyl group to form malonyl-CoA. The polypeptide is Biotin carboxylase 2 (accC2) (Bacillus subtilis (strain 168)).